The following is a 225-amino-acid chain: MMLKKEQTTNNLKLPISLNASGWLESSPDWSNISGLVAGVDEVGRGALFGPVVAASVILPASAFPHLMTAEIKDSKKLSHSRRVQLAQQISTLAIDWRIGYATTAEIDRINILQATLLAMKRSVKKLKLQPILCLIDGNQPVQDLLMLQQTIVKGDERSLNIAAASIMAKVWRDDLIQRLATKYPMYDLKSNKGYGSKKHLLALAQHGASPLHRQSFRPCQISPD.

An RNase H type-2 domain is found at 35 to 225 (GLVAGVDEVG…SFRPCQISPD (191 aa)). Residues Asp41, Glu42, and Asp137 each coordinate a divalent metal cation.

The protein belongs to the RNase HII family. Mn(2+) serves as cofactor. Requires Mg(2+) as cofactor.

It is found in the cytoplasm. The catalysed reaction is Endonucleolytic cleavage to 5'-phosphomonoester.. Its function is as follows. Endonuclease that specifically degrades the RNA of RNA-DNA hybrids. The polypeptide is Ribonuclease HII (Nostoc sp. (strain PCC 7120 / SAG 25.82 / UTEX 2576)).